A 201-amino-acid chain; its full sequence is Large ribosomal subunit protein uL4 (201 aa).

The segment at 46 to 71 (QKTRAEVVGSGKKPWRQKGTGRARAG) is disordered.

It belongs to the universal ribosomal protein uL4 family. In terms of assembly, part of the 50S ribosomal subunit.

Functionally, one of the primary rRNA binding proteins, this protein initially binds near the 5'-end of the 23S rRNA. It is important during the early stages of 50S assembly. It makes multiple contacts with different domains of the 23S rRNA in the assembled 50S subunit and ribosome. In terms of biological role, forms part of the polypeptide exit tunnel. The protein is Large ribosomal subunit protein uL4 of Shewanella piezotolerans (strain WP3 / JCM 13877).